The chain runs to 367 residues: Protein RecA (367 aa).

Residue Gly-73–Thr-80 coordinates ATP.

Belongs to the RecA family.

Its subcellular location is the cytoplasm. Its function is as follows. Can catalyze the hydrolysis of ATP in the presence of single-stranded DNA, the ATP-dependent uptake of single-stranded DNA by duplex DNA, and the ATP-dependent hybridization of homologous single-stranded DNAs. It interacts with LexA causing its activation and leading to its autocatalytic cleavage. The sequence is that of Protein RecA from Delftia acidovorans (strain DSM 14801 / SPH-1).